The chain runs to 90 residues: Small ribosomal subunit protein uS15c (90 aa).

Belongs to the universal ribosomal protein uS15 family. As to quaternary structure, part of the 30S ribosomal subunit.

It localises to the plastid. Its subcellular location is the chloroplast. The sequence is that of Small ribosomal subunit protein uS15c (rps15) from Acorus calamus (Sweet flag).